Consider the following 486-residue polypeptide: Galactose-3-O-sulfotransferase 4 (486 aa).

Over 1 to 18 (MGPLSPARTLRLWGPRSL) the chain is Cytoplasmic. A helical; Signal-anchor for type II membrane protein transmembrane segment spans residues 19–39 (GVALGVFMTIGFALQLLGGPF). The Lumenal portion of the chain corresponds to 40–486 (QRRLPGLQLR…PLKTSRPLSP (447 aa)). N374 is a glycosylation site (N-linked (GlcNAc...) asparagine).

The protein belongs to the galactose-3-O-sulfotransferase family. Mn(2+) serves as cofactor. In terms of tissue distribution, expressed mainly in placenta, thymus, testis, ovary, spinal cord, trachea and adrenal gland and at low levels in brain, lung, spleen, prostate, small intestine, colon, stomach thyroid and lymph node.

Its subcellular location is the golgi apparatus. The protein localises to the golgi stack membrane. The protein operates within protein modification; carbohydrate sulfation. Functionally, catalyzes the transfer of sulfate to beta-1,3-linked galactose residues in O-linked glycoproteins. Good substrates include asialofetuin, Gal-beta-1,3-GalNAc and Gal-beta-1,3 (GlcNAc-beta-1,6)GalNAc. This is Galactose-3-O-sulfotransferase 4 (GAL3ST4) from Homo sapiens (Human).